We begin with the raw amino-acid sequence, 182 residues long: Acireductone dioxygenase (182 aa).

4 residues coordinate Fe(2+): His-100, His-102, Glu-106, and His-145. Ni(2+)-binding residues include His-100, His-102, Glu-106, and His-145.

It belongs to the acireductone dioxygenase (ARD) family. As to quaternary structure, monomer. The cofactor is Fe(2+). It depends on Ni(2+) as a cofactor.

The catalysed reaction is 1,2-dihydroxy-5-(methylsulfanyl)pent-1-en-3-one + O2 = 3-(methylsulfanyl)propanoate + CO + formate + 2 H(+). The enzyme catalyses 1,2-dihydroxy-5-(methylsulfanyl)pent-1-en-3-one + O2 = 4-methylsulfanyl-2-oxobutanoate + formate + 2 H(+). Its pathway is amino-acid biosynthesis; L-methionine biosynthesis via salvage pathway; L-methionine from S-methyl-5-thio-alpha-D-ribose 1-phosphate: step 5/6. Functionally, catalyzes 2 different reactions between oxygen and the acireductone 1,2-dihydroxy-3-keto-5-methylthiopentene (DHK-MTPene) depending upon the metal bound in the active site. Fe-containing acireductone dioxygenase (Fe-ARD) produces formate and 2-keto-4-methylthiobutyrate (KMTB), the alpha-ketoacid precursor of methionine in the methionine recycle pathway. Ni-containing acireductone dioxygenase (Ni-ARD) produces methylthiopropionate, carbon monoxide and formate, and does not lie on the methionine recycle pathway. This is Acireductone dioxygenase from Nostoc sp. (strain PCC 7120 / SAG 25.82 / UTEX 2576).